Here is a 302-residue protein sequence, read N- to C-terminus: Rhomboid-related protein 2 (302 aa).

The segment at 1 to 38 (MAVAHEMEMESVNLNMEREGKEEPEEEKMKGNGEGKDF) is disordered. Over residues 16–38 (MEREGKEEPEEEKMKGNGEGKDF) the composition is skewed to basic and acidic residues. Helical transmembrane passes span 71–91 (PLFIILISLAELAVFIYYAVW), 127–147 (LVHAGVQHIVGNLLMQIVLGI), 158–178 (VGLVYLAGVLAGSLASSIFDP), 182–202 (LVGASGGVYALMGGYFMNVIV), 211–231 (FGIVRLLVIILIVASDMGFAL), 244–264 (VSFAAHIAGGFAGMSIGYTVF), and 277–297 (FWIAIAAYVACLLFAVFFNIF). The active-site Nucleophile is the S186. The active site involves H249.

This sequence belongs to the peptidase S54 family. Post-translationally, proteolytic processing of the proenzyme produces an N- and a C-terminal fragment. The processing is required for activation of the protease.

The protein localises to the cell membrane. The enzyme catalyses Cleaves type-1 transmembrane domains using a catalytic dyad composed of serine and histidine that are contributed by different transmembrane domains.. Functionally, involved in regulated intramembrane proteolysis and the subsequent release of functional polypeptides from their membrane anchors. Known substrate: EFNB3. This Mus musculus (Mouse) protein is Rhomboid-related protein 2 (Rhbdl2).